The chain runs to 613 residues: Epsin-2 (613 aa).

The region spanning 11-143 is the ENTH domain; it reads NMMKGYSSTQ…NDEERLREER (133 aa). Disordered stretches follow at residues 140–208, 323–351, and 356–375; these read REER…DDED, TAAN…PFSM, and RQKQ…EARQ. The span at 148–167 shows a compositional bias: basic residues; it reads RNRRANRAARPRPRRQRTRS. The residue at position 165 (Thr165) is a Phosphothreonine. At Ser167 the chain carries Phosphoserine. UIM domains lie at 175–194 and 206–225; these read SYQD…AQED and DEDP…EELK. The segment covering 179–188 has biased composition (basic and acidic residues); that stretch reads DLEKALEESR. The span at 323–339 shows a compositional bias: low complexity; the sequence is TAANMQQQQQQPADFQQ. Positions 340 to 350 are enriched in polar residues; the sequence is PLPTGSNNPFS. A Glycyl lysine isopeptide (Lys-Gly) (interchain with G-Cter in ubiquitin) cross-link involves residue Lys426. At Thr430 the chain carries Phosphothreonine. Ser434 is modified (phosphoserine). Phosphothreonine is present on residues Thr450, Thr468, and Thr470. Residues 471–512 are compositionally biased toward polar residues; it reads GTFINSQGTGYKQVTNEPKNNPFLSNQYTGLPSTNIVPTQTG. Positions 471–613 are disordered; it reads GTFINSQGTG…PDQGVSLIDL (143 aa). The segment covering 526–600 has biased composition (low complexity); it reads SPQQNPTGIS…QQQQQQQQQQ (75 aa).

This sequence belongs to the epsin family. Post-translationally, phosphorylated by PRK1.

Its subcellular location is the cytoplasm. It localises to the membrane. Binds to membranes enriched in phosphatidylinositol 3,5-bisphosphate (PtdIns(3,5)P2) and phosphatidylinositol 4,5-bisphosphate (PtdIns(4,5)P2). Required for endocytosis and localization of actin. This chain is Epsin-2 (ENT2), found in Saccharomyces cerevisiae (strain ATCC 204508 / S288c) (Baker's yeast).